The sequence spans 172 residues: Putative acetyltransferase YvoF (172 aa).

The protein belongs to the transferase hexapeptide repeat family.

In Bacillus subtilis (strain 168), this protein is Putative acetyltransferase YvoF (yvoF).